The sequence spans 847 residues: Alanine--tRNA ligase (847 aa).

Zn(2+) contacts are provided by His554, His558, Cys656, and His660.

It belongs to the class-II aminoacyl-tRNA synthetase family. Requires Zn(2+) as cofactor.

It is found in the cytoplasm. The enzyme catalyses tRNA(Ala) + L-alanine + ATP = L-alanyl-tRNA(Ala) + AMP + diphosphate. Catalyzes the attachment of alanine to tRNA(Ala) in a two-step reaction: alanine is first activated by ATP to form Ala-AMP and then transferred to the acceptor end of tRNA(Ala). Also edits incorrectly charged Ser-tRNA(Ala) and Gly-tRNA(Ala) via its editing domain. The sequence is that of Alanine--tRNA ligase from Helicobacter pylori (strain Shi470).